The primary structure comprises 192 residues: Inosine triphosphate pyrophosphatase (192 aa).

11–16 provides a ligand contact to ITP; that stretch reads TGNKNK. E41 lines the Mg(2+) pocket. Residues K53, 69–70, K86, 146–149, K169, and 174–175 contribute to the ITP site; these read DT, FGWD, and HR.

Belongs to the HAM1 NTPase family. As to quaternary structure, homodimer. Mg(2+) is required as a cofactor. It depends on Mn(2+) as a cofactor.

Its subcellular location is the cytoplasm. The enzyme catalyses ITP + H2O = IMP + diphosphate + H(+). It carries out the reaction dITP + H2O = dIMP + diphosphate + H(+). The catalysed reaction is XTP + H2O = XMP + diphosphate + H(+). In terms of biological role, pyrophosphatase that hydrolyzes non-canonical purine nucleotides such as inosine triphosphate (ITP), deoxyinosine triphosphate (dITP) or xanthosine 5'-triphosphate (XTP) to their respective monophosphate derivatives. The enzyme does not distinguish between the deoxy- and ribose forms. Probably excludes non-canonical purines from RNA and DNA precursor pools, thus preventing their incorporation into RNA and DNA and avoiding chromosomal lesions. The chain is Inosine triphosphate pyrophosphatase from Ciona intestinalis (Transparent sea squirt).